A 279-amino-acid chain; its full sequence is Large ribosomal subunit protein uL2 (279 aa).

Disordered regions lie at residues 29 to 53 (PEKSLLRPLSKSGGRNNQGRITTRH) and 224 to 279 (VAMN…KKRK). Over residues 253-268 (KEGRTRHPNKESDKLI) the composition is skewed to basic and acidic residues. Residues 269–279 (VRRRNAGKKRK) show a composition bias toward basic residues.

The protein belongs to the universal ribosomal protein uL2 family. In terms of assembly, part of the 50S ribosomal subunit. Forms a bridge to the 30S subunit in the 70S ribosome.

Functionally, one of the primary rRNA binding proteins. Required for association of the 30S and 50S subunits to form the 70S ribosome, for tRNA binding and peptide bond formation. It has been suggested to have peptidyltransferase activity; this is somewhat controversial. Makes several contacts with the 16S rRNA in the 70S ribosome. This chain is Large ribosomal subunit protein uL2, found in Leifsonia xyli subsp. xyli (strain CTCB07).